A 137-amino-acid chain; its full sequence is Protein cornichon homolog 4 (137 aa).

Helical transmembrane passes span 8 to 28 (LISF…LVCL), 53 to 73 (FIVQ…FMTL), and 113 to 133 (LAYI…SALD).

This sequence belongs to the cornichon family.

It localises to the membrane. This Arabidopsis thaliana (Mouse-ear cress) protein is Protein cornichon homolog 4.